A 209-amino-acid polypeptide reads, in one-letter code: Large ribosomal subunit protein uL3 (209 aa).

Residue Gln-150 is modified to N5-methylglutamine.

This sequence belongs to the universal ribosomal protein uL3 family. As to quaternary structure, part of the 50S ribosomal subunit. Forms a cluster with proteins L14 and L19. Methylated by PrmB.

In terms of biological role, one of the primary rRNA binding proteins, it binds directly near the 3'-end of the 23S rRNA, where it nucleates assembly of the 50S subunit. This chain is Large ribosomal subunit protein uL3, found in Vibrio vulnificus (strain YJ016).